The chain runs to 337 residues: F420-dependent glucose-6-phosphate dehydrogenase 2 (337 aa).

Asp40 provides a ligand contact to coenzyme F420-(gamma-Glu)n. Residue His41 is the Proton donor of the active site. Coenzyme F420-(gamma-Glu)n contacts are provided by residues Thr77 and 108 to 109 (TG). The active-site Proton acceptor is the Glu110. Residues Asn113, 178–179 (GG), and 181–182 (VV) contribute to the coenzyme F420-(gamma-Glu)n site. Substrate is bound by residues Thr196, Lys199, Lys260, and Arg284.

This sequence belongs to the F420-dependent glucose-6-phosphate dehydrogenase family. Homodimer.

It carries out the reaction oxidized coenzyme F420-(gamma-L-Glu)(n) + D-glucose 6-phosphate + H(+) = 6-phospho-D-glucono-1,5-lactone + reduced coenzyme F420-(gamma-L-Glu)(n). In terms of biological role, catalyzes the coenzyme F420-dependent oxidation of glucose 6-phosphate (G6P) to 6-phosphogluconolactone. In Rhodococcus jostii (strain RHA1), this protein is F420-dependent glucose-6-phosphate dehydrogenase 2.